Here is a 144-residue protein sequence, read N- to C-terminus: Small ribosomal subunit protein uS19 (144 aa).

It belongs to the universal ribosomal protein uS19 family.

In Dictyostelium discoideum (Social amoeba), this protein is Small ribosomal subunit protein uS19 (rps15).